Reading from the N-terminus, the 276-residue chain is Large ribosomal subunit protein uL2 (276 aa).

2 disordered regions span residues 36 to 55 (PLPR…RHRG) and 219 to 276 (TVRG…GRKK). Residues 255–276 (LGKKTRKKKNRSNKLIVRGRKK) are compositionally biased toward basic residues.

This sequence belongs to the universal ribosomal protein uL2 family. In terms of assembly, part of the 50S ribosomal subunit. Forms a bridge to the 30S subunit in the 70S ribosome.

One of the primary rRNA binding proteins. Required for association of the 30S and 50S subunits to form the 70S ribosome, for tRNA binding and peptide bond formation. It has been suggested to have peptidyltransferase activity; this is somewhat controversial. Makes several contacts with the 16S rRNA in the 70S ribosome. This Macrococcus caseolyticus (strain JCSC5402) (Macrococcoides caseolyticum) protein is Large ribosomal subunit protein uL2.